We begin with the raw amino-acid sequence, 312 residues long: Olfactory receptor 8K3 (312 aa).

The Extracellular segment spans residues 1 to 25 (MEQHNLTTVNEFILTGITDIAELQA). Asparagine 5 carries an N-linked (GlcNAc...) asparagine glycan. Residues 26–46 (PLFALFLMIYVISVMGNLGMI) form a helical membrane-spanning segment. Residues 47–54 (VLTKLDSR) lie on the Cytoplasmic side of the membrane. Residues 55–75 (LQTPMYFFLRHLAFMDLGYST) traverse the membrane as a helical segment. The Extracellular portion of the chain corresponds to 76–99 (TVGPKMLVNFVVDKNIISYYFCAT). A disulfide bridge links cysteine 97 with cysteine 189. A helical membrane pass occupies residues 100–120 (QLAFFLVFIGSELFILSAMSY). Topologically, residues 121 to 139 (DLYVAICNPLLYTVIMSRR) are cytoplasmic. The chain crosses the membrane as a helical span at residues 140-160 (VCQVLVAIPYLYCTFISLLVT). Residues 161–197 (IKIFTLSFCGYNVISHFYCDSLPLLPLLCSNTHEIEL) are Extracellular-facing. A helical transmembrane segment spans residues 198–217 (IILIFAAIDLISSLLIVLLS). Topologically, residues 218-236 (YLLILVAILRMNSAGRQKA) are cytoplasmic. Residues 237 to 257 (FSTCGAHLTVVIVFYGTLLFM) traverse the membrane as a helical segment. Topologically, residues 258–270 (YVQPKSSHSFDTD) are extracellular. Residues 271-291 (KVASIFYTLVIPMLNPLIYSL) traverse the membrane as a helical segment. Residues 292–312 (RNKDVKYALRRTWNNLCNIFV) lie on the Cytoplasmic side of the membrane.

This sequence belongs to the G-protein coupled receptor 1 family.

It is found in the cell membrane. Functionally, odorant receptor. This Homo sapiens (Human) protein is Olfactory receptor 8K3 (OR8K3).